Here is a 288-residue protein sequence, read N- to C-terminus: Elongation factor Ts (288 aa).

Residues 82-85 (TDFV) are involved in Mg(2+) ion dislocation from EF-Tu.

This sequence belongs to the EF-Ts family.

It is found in the cytoplasm. In terms of biological role, associates with the EF-Tu.GDP complex and induces the exchange of GDP to GTP. It remains bound to the aminoacyl-tRNA.EF-Tu.GTP complex up to the GTP hydrolysis stage on the ribosome. This Chlorobium chlorochromatii (strain CaD3) protein is Elongation factor Ts.